A 105-amino-acid chain; its full sequence is Putative thioredoxin-5 (105 aa).

The Thioredoxin domain maps to 1–104 (MYKEPKNESE…VALENMVKKL (104 aa)). Catalysis depends on nucleophile residues cysteine 30 and cysteine 33. The cysteines at positions 30 and 33 are disulfide-linked.

The protein belongs to the thioredoxin family.

In terms of biological role, participates in various redox reactions through the reversible oxidation of its active center dithiol to a disulfide and catalyzes dithiol-disulfide exchange reactions. This Dictyostelium discoideum (Social amoeba) protein is Putative thioredoxin-5 (trxE).